Reading from the N-terminus, the 289-residue chain is Lipoyl synthase 1 (289 aa).

Positions 33, 38, 44, 59, 63, 66, and 274 each coordinate [4Fe-4S] cluster. Residues 45–263 form the Radical SAM core domain; sequence FAGGTATFLI…RIGEEELGFL (219 aa).

It belongs to the radical SAM superfamily. Lipoyl synthase family. It depends on [4Fe-4S] cluster as a cofactor.

It localises to the cytoplasm. It catalyses the reaction [[Fe-S] cluster scaffold protein carrying a second [4Fe-4S](2+) cluster] + N(6)-octanoyl-L-lysyl-[protein] + 2 oxidized [2Fe-2S]-[ferredoxin] + 2 S-adenosyl-L-methionine + 4 H(+) = [[Fe-S] cluster scaffold protein] + N(6)-[(R)-dihydrolipoyl]-L-lysyl-[protein] + 4 Fe(3+) + 2 hydrogen sulfide + 2 5'-deoxyadenosine + 2 L-methionine + 2 reduced [2Fe-2S]-[ferredoxin]. Its pathway is protein modification; protein lipoylation via endogenous pathway; protein N(6)-(lipoyl)lysine from octanoyl-[acyl-carrier-protein]: step 2/2. Functionally, catalyzes the radical-mediated insertion of two sulfur atoms into the C-6 and C-8 positions of the octanoyl moiety bound to the lipoyl domains of lipoate-dependent enzymes, thereby converting the octanoylated domains into lipoylated derivatives. The chain is Lipoyl synthase 1 from Parasynechococcus marenigrum (strain WH8102).